We begin with the raw amino-acid sequence, 432 residues long: Glutamate-1-semialdehyde 2,1-aminomutase (432 aa).

K267 carries the N6-(pyridoxal phosphate)lysine modification.

This sequence belongs to the class-III pyridoxal-phosphate-dependent aminotransferase family. HemL subfamily. As to quaternary structure, homodimer. Requires pyridoxal 5'-phosphate as cofactor.

It is found in the cytoplasm. The enzyme catalyses (S)-4-amino-5-oxopentanoate = 5-aminolevulinate. The protein operates within porphyrin-containing compound metabolism; protoporphyrin-IX biosynthesis; 5-aminolevulinate from L-glutamyl-tRNA(Glu): step 2/2. This is Glutamate-1-semialdehyde 2,1-aminomutase from Rhodococcus erythropolis (strain PR4 / NBRC 100887).